A 114-amino-acid chain; its full sequence is Phosphoribosyl-AMP cyclohydrolase (114 aa).

D80 contacts Mg(2+). A Zn(2+)-binding site is contributed by C81. Positions 82 and 84 each coordinate Mg(2+). Residues C97 and C104 each coordinate Zn(2+).

Belongs to the PRA-CH family. As to quaternary structure, homodimer. The cofactor is Mg(2+). Zn(2+) serves as cofactor.

It localises to the cytoplasm. The enzyme catalyses 1-(5-phospho-beta-D-ribosyl)-5'-AMP + H2O = 1-(5-phospho-beta-D-ribosyl)-5-[(5-phospho-beta-D-ribosylamino)methylideneamino]imidazole-4-carboxamide. It participates in amino-acid biosynthesis; L-histidine biosynthesis; L-histidine from 5-phospho-alpha-D-ribose 1-diphosphate: step 3/9. Its function is as follows. Catalyzes the hydrolysis of the adenine ring of phosphoribosyl-AMP. This chain is Phosphoribosyl-AMP cyclohydrolase, found in Rhodococcus jostii (strain RHA1).